The primary structure comprises 273 residues: Glutamate racemase (273 aa).

Substrate is bound by residues 11–12 and 43–44; these read DS and YG. Residue Cys74 is the Proton donor/acceptor of the active site. 75–76 serves as a coordination point for substrate; it reads NT. The active-site Proton donor/acceptor is the Cys185. 186-187 contacts substrate; the sequence is TH.

This sequence belongs to the aspartate/glutamate racemases family.

It catalyses the reaction L-glutamate = D-glutamate. The protein operates within cell wall biogenesis; peptidoglycan biosynthesis. In terms of biological role, provides the (R)-glutamate required for cell wall biosynthesis. This chain is Glutamate racemase, found in Lactiplantibacillus plantarum (strain ATCC BAA-793 / NCIMB 8826 / WCFS1) (Lactobacillus plantarum).